The primary structure comprises 284 residues: NAD kinase (284 aa).

Residue Asp70 is the Proton acceptor of the active site. NAD(+) contacts are provided by residues 70–71, 139–140, Lys167, Asp169, Leu177, 180–185, and Gln236; these read DG, NE, and TAYNLS.

Belongs to the NAD kinase family. A divalent metal cation is required as a cofactor.

The protein localises to the cytoplasm. The catalysed reaction is NAD(+) + ATP = ADP + NADP(+) + H(+). Involved in the regulation of the intracellular balance of NAD and NADP, and is a key enzyme in the biosynthesis of NADP. Catalyzes specifically the phosphorylation on 2'-hydroxyl of the adenosine moiety of NAD to yield NADP. The chain is NAD kinase from Helicobacter pylori (strain G27).